Here is a 151-residue protein sequence, read N- to C-terminus: Ribosome maturation factor RimP (151 aa).

Belongs to the RimP family.

The protein localises to the cytoplasm. In terms of biological role, required for maturation of 30S ribosomal subunits. In Pseudoalteromonas translucida (strain TAC 125), this protein is Ribosome maturation factor RimP.